The following is a 209-amino-acid chain: Peptidyl-tRNA hydrolase (209 aa).

Residue tyrosine 14 coordinates tRNA. Histidine 19 functions as the Proton acceptor in the catalytic mechanism. 3 residues coordinate tRNA: tyrosine 68, asparagine 70, and asparagine 116.

The protein belongs to the PTH family. As to quaternary structure, monomer.

The protein localises to the cytoplasm. It catalyses the reaction an N-acyl-L-alpha-aminoacyl-tRNA + H2O = an N-acyl-L-amino acid + a tRNA + H(+). Hydrolyzes ribosome-free peptidyl-tRNAs (with 1 or more amino acids incorporated), which drop off the ribosome during protein synthesis, or as a result of ribosome stalling. Its function is as follows. Catalyzes the release of premature peptidyl moieties from peptidyl-tRNA molecules trapped in stalled 50S ribosomal subunits, and thus maintains levels of free tRNAs and 50S ribosomes. The protein is Peptidyl-tRNA hydrolase of Phenylobacterium zucineum (strain HLK1).